The primary structure comprises 351 residues: tRNA uridine(34) hydroxylase (351 aa).

One can recognise a Rhodanese domain in the interval 146-240; it reads DDPQALFVDM…YARRAREQGL (95 aa). Cys-200 (cysteine persulfide intermediate) is an active-site residue.

Belongs to the TrhO family.

The enzyme catalyses uridine(34) in tRNA + AH2 + O2 = 5-hydroxyuridine(34) in tRNA + A + H2O. Functionally, catalyzes oxygen-dependent 5-hydroxyuridine (ho5U) modification at position 34 in tRNAs. The protein is tRNA uridine(34) hydroxylase of Sodalis glossinidius (strain morsitans).